The sequence spans 300 residues: Putative S-adenosyl-L-methionine-dependent methyltransferase MMAR_1058 (300 aa).

Residues Asp-127 and 156-157 (DL) each bind S-adenosyl-L-methionine.

This sequence belongs to the UPF0677 family.

Functionally, exhibits S-adenosyl-L-methionine-dependent methyltransferase activity. The sequence is that of Putative S-adenosyl-L-methionine-dependent methyltransferase MMAR_1058 from Mycobacterium marinum (strain ATCC BAA-535 / M).